Consider the following 377-residue polypeptide: Chaperone protein DnaJ (377 aa).

One can recognise a J domain in the interval 5–70; the sequence is DYYEVLGVSR…DKKAAYDQFG (66 aa). The CR-type zinc finger occupies 133–211; the sequence is GLTKELRIPT…CHGDGRVEKS (79 aa). Zn(2+) contacts are provided by Cys146, Cys149, Cys163, Cys166, Cys185, Cys188, Cys199, and Cys202. CXXCXGXG motif repeat units follow at residues 146–153, 163–170, 185–192, and 199–206; these read CDLCEGSG, CGTCHGQG, CPTCHGRG, and CSKCHGDG.

Belongs to the DnaJ family. Homodimer. It depends on Zn(2+) as a cofactor.

The protein resides in the cytoplasm. Participates actively in the response to hyperosmotic and heat shock by preventing the aggregation of stress-denatured proteins and by disaggregating proteins, also in an autonomous, DnaK-independent fashion. Unfolded proteins bind initially to DnaJ; upon interaction with the DnaJ-bound protein, DnaK hydrolyzes its bound ATP, resulting in the formation of a stable complex. GrpE releases ADP from DnaK; ATP binding to DnaK triggers the release of the substrate protein, thus completing the reaction cycle. Several rounds of ATP-dependent interactions between DnaJ, DnaK and GrpE are required for fully efficient folding. Also involved, together with DnaK and GrpE, in the DNA replication of plasmids through activation of initiation proteins. The protein is Chaperone protein DnaJ of Shewanella baltica (strain OS195).